Reading from the N-terminus, the 129-residue chain is MNLIAKLEQEEIERALAGKTIPEFAPGDTVIVNVNVVEGNRKRVQAYEGVVIAKRNRGLNSSFIVRKISSGEGVERTFQTYSPLLASIVVKRRGDVRRAKLYYLRERSGKSARIKEKLVSKDRAAAAQQ.

The protein belongs to the bacterial ribosomal protein bL19 family.

Its function is as follows. This protein is located at the 30S-50S ribosomal subunit interface and may play a role in the structure and function of the aminoacyl-tRNA binding site. This is Large ribosomal subunit protein bL19 from Burkholderia mallei (strain NCTC 10247).